The chain runs to 562 residues: Glucocorticoid modulatory element-binding protein 1 (562 aa).

Position 2 is an N-acetylalanine (Ala2). The region spanning Ala72–Asp156 is the SAND domain. Residue Cys103 coordinates Zn(2+). Positions 129, 133, 136, and 147 each coordinate DNA. Zn(2+) contacts are provided by His160, Cys164, and Cys168. The stretch at Leu311–Asn355 forms a coiled coil. Residues Pro360 to Ser384 form a disordered region. The segment covering Pro375–Ser384 has biased composition (polar residues).

Homodimer, and heterodimer of GMEB1 and GMEB2. Interacts with TRIM63. Interacts with the glucocorticoid receptor (NR3C1) and NCOA2/TIF2. May interact with HSP27 and CREB-binding protein (CBP). Ubiquitous. Low levels were detected in heart, brain, spleen, lung, liver, skeletal muscle, kidney and testis.

It localises to the nucleus. The protein resides in the cytoplasm. Its function is as follows. Trans-acting factor that binds to glucocorticoid modulatory elements (GME) present in the TAT (tyrosine aminotransferase) promoter and increases sensitivity to low concentrations of glucocorticoids. Also binds to the transferrin receptor promoter. In Mus musculus (Mouse), this protein is Glucocorticoid modulatory element-binding protein 1 (Gmeb1).